A 193-amino-acid chain; its full sequence is Peptidyl-tRNA hydrolase (193 aa).

Tyr-17 contacts tRNA. His-22 (proton acceptor) is an active-site residue. The tRNA site is built by Phe-68, Asn-70, and Asn-116.

It belongs to the PTH family. In terms of assembly, monomer.

Its subcellular location is the cytoplasm. The catalysed reaction is an N-acyl-L-alpha-aminoacyl-tRNA + H2O = an N-acyl-L-amino acid + a tRNA + H(+). Its function is as follows. Hydrolyzes ribosome-free peptidyl-tRNAs (with 1 or more amino acids incorporated), which drop off the ribosome during protein synthesis, or as a result of ribosome stalling. In terms of biological role, catalyzes the release of premature peptidyl moieties from peptidyl-tRNA molecules trapped in stalled 50S ribosomal subunits, and thus maintains levels of free tRNAs and 50S ribosomes. This chain is Peptidyl-tRNA hydrolase, found in Acinetobacter baylyi (strain ATCC 33305 / BD413 / ADP1).